Consider the following 1068-residue polypeptide: TSC22 domain family protein 1 (1068 aa).

The tract at residues 1–98 is required for interaction with TGFBR1 and promotion of TGF-beta signaling; sequence MHQPPESTAA…SQAQLQAQPL (98 aa). 3 disordered regions span residues 23 to 110, 125 to 288, and 602 to 623; these read AHPA…KKSG, ISSN…SPAS, and YSQA…QQLQ. The segment covering 36-55 has biased composition (low complexity); it reads GSASALNAAGTGVGSSATSS. Residues 58–70 are compositionally biased toward pro residues; sequence FPPPSLLQPPPPA. The span at 84–100 shows a compositional bias: low complexity; it reads SLNLLSQAQLQAQPLAP. Over residues 133–142 the composition is skewed to acidic residues; that stretch reads EDTESYDDLD. A compositionally biased stretch (basic residues) spans 216–240; that stretch reads HPHHLHHHHHIHHGHHLQHGHHHPS. Positions 241 to 250 are enriched in low complexity; the sequence is HVAVASASIP. A compositionally biased stretch (polar residues) spans 261-271; it reads KLSTTGSSDSI. At S263 the chain carries Phosphoserine. The segment covering 272–288 has biased composition (low complexity); that stretch reads TPVAPTSAVSSSGSPAS. A compositionally biased stretch (pro residues) spans 609-620; the sequence is VQTPLPGAPPPQ. A leucine-zipper region spans residues 1000-1021; sequence VLKEQIKELIEKNSQLEQENNL. The segment at 1032 to 1068 is disordered; that stretch reads AQFQAQLQTGSPPATTQPQGTTQPPAQPASQGSGPTA. Low complexity predominate over residues 1039 to 1068; that stretch reads QTGSPPATTQPQGTTQPPAQPASQGSGPTA.

The protein belongs to the TSC-22/Dip/Bun family. As to quaternary structure, forms homodimers. Forms heterodimers. Component of a complex composed of TSC22D1 (via N-terminus), TGFBR1 and TGFBR2; the interaction between TSC22D1 and TGFBR1 is inhibited by SMAD7 and promoted by TGFB1. Interacts with SMAD7; the interaction requires TGF-beta and the interaction is inhibited by TGFBR1. Interacts with TPT1/fortilin; interaction results in the destabilization of TSC22D1 protein and prevents TSC22D1-mediated apoptosis. Interacts with SMAD4 (via N-terminus). Interacts with ACVRL1/ALK1, ACVR1/ALK2, BMPR1A/ALK3, ACVR1B/ALK4, BMPR1B/ALK6, ACVR2A/ACTRII, and BMPR2. Interacts with SMAD6. Interacts with TFE3; the interaction is enhanced in the presence of TGF-beta. In terms of assembly, forms a heterodimer with TSC22D4/THG1. Forms a heterodimer with TSC22D4/THG1. Interacts with histone H1-2. Interacts with GNL3.

Its subcellular location is the cytoplasm. It localises to the nucleus. It is found in the cell membrane. The protein resides in the mitochondrion. In terms of biological role, transcriptional repressor. Acts on the C-type natriuretic peptide (CNP) promoter. Acts to promote CASP3-mediated apoptosis. Positively regulates TGF-beta signaling by interacting with SMAD7 which inhibits binding of SMAD7 to TGFBR1, preventing recruitment of SMURF ubiquitin ligases to TGFBR1 and inhibiting SMURF-mediated ubiquitination and degradation of TGFBR1. Contributes to enhancement of TGF-beta signaling by binding to and modulating the transcription activator activity of SMAD4. Promotes TGF-beta-induced transcription of COL1A2; via its interaction with TFE3 at E-boxes in the gene proximal promoter. Plays a role in the repression of hematopoietic precursor cell growth. Promotes IL2 deprivation-induced apoptosis in T-lymphocytes, via repression of TSC22D3/GILZ transcription and activation of the caspase cascade. Functionally, may act to negatively regulate TGFB3 signaling and thereby inhibit cell death in mammary gland cells. Positively regulates cell death in response to TGFB3 during mammary gland involution. This is TSC22 domain family protein 1 from Macaca fascicularis (Crab-eating macaque).